We begin with the raw amino-acid sequence, 493 residues long: Cytoplasmic tRNA 2-thiolation protein 2 (493 aa).

Serine 489 carries the phosphoserine modification.

This sequence belongs to the CTU2/NCS2 family. Interacts with NCS6 and URM1. May act by forming a heterodimer with NCS6.

It localises to the cytoplasm. It functions in the pathway tRNA modification; 5-methoxycarbonylmethyl-2-thiouridine-tRNA biosynthesis. Its function is as follows. Plays a central role in 2-thiolation of mcm(5)S(2)U at tRNA wobble positions of tRNA(Lys), tRNA(Glu) and tRNA(Gln). May act by forming a heterodimer with NCS6 that ligates sulfur from thiocarboxylated URM1 onto the uridine of tRNAs at wobble position. Prior mcm(5) tRNA modification by the elongator complex is required for 2-thiolation. May also be involved in protein urmylation and in invasive and pseudohyphal growth. Inhibits replication of Brome mosaic virus. This is Cytoplasmic tRNA 2-thiolation protein 2 from Saccharomyces cerevisiae (strain ATCC 204508 / S288c) (Baker's yeast).